A 277-amino-acid chain; its full sequence is MSDTPIRTVFFISDGTGITAETLGHSLLAQFPGARFRQVRVPFVDDLDKALDCARQIRETAVTDGVRPIVFSTLVNPDPLSGLREIDALFVDLFEQFINPLEAELGQRSTHTVGRFHGIAESSDYKARIEAINFAMAHDDGVSTDGELADADVILVGVSRSGKTPTSLYLAVQFGVKAANYPLIPEDFERNKLPGELHRHRSKLFGLTIAPERLSQIRQERRPNSRYASIENCRFEIDAAQKLMRRENIQWLDSTSKSIEEISATILQAVRLNRPVY.

157–164 (GVSRSGKT) contributes to the ADP binding site.

The protein belongs to the pyruvate, phosphate/water dikinase regulatory protein family. PSRP subfamily.

It carries out the reaction [pyruvate, water dikinase] + ADP = [pyruvate, water dikinase]-phosphate + AMP + H(+). The enzyme catalyses [pyruvate, water dikinase]-phosphate + phosphate + H(+) = [pyruvate, water dikinase] + diphosphate. Its function is as follows. Bifunctional serine/threonine kinase and phosphorylase involved in the regulation of the phosphoenolpyruvate synthase (PEPS) by catalyzing its phosphorylation/dephosphorylation. The sequence is that of Putative phosphoenolpyruvate synthase regulatory protein from Aromatoleum aromaticum (strain DSM 19018 / LMG 30748 / EbN1) (Azoarcus sp. (strain EbN1)).